A 290-amino-acid chain; its full sequence is 4-hydroxybenzoate octaprenyltransferase (290 aa).

The next 8 membrane-spanning stretches (helical) occupy residues 33–53 (LAALWVAADGFPGWHLLAVFV), 91–111 (LGVREAALVGVVLTLVAFVLV), 116–136 (WEAVAWSVPAVLFTILYPFTK), 138–158 (FFAMPQAFLGIAFNFGIVIAF), 165–185 (VPATAWVLWLANLFLVLAYDT), 212–232 (VAAIMGFFVLCLGLTAWVLAP), 237–257 (WPLWLGLGVAAAQVAWHFTLI), and 269–289 (FSKSHWIGAAIFAGVALGYLL).

This sequence belongs to the UbiA prenyltransferase family. Mg(2+) serves as cofactor.

It localises to the cell inner membrane. It carries out the reaction all-trans-octaprenyl diphosphate + 4-hydroxybenzoate = 4-hydroxy-3-(all-trans-octaprenyl)benzoate + diphosphate. It participates in cofactor biosynthesis; ubiquinone biosynthesis. Functionally, catalyzes the prenylation of para-hydroxybenzoate (PHB) with an all-trans polyprenyl group. Mediates the second step in the final reaction sequence of ubiquinone-8 (UQ-8) biosynthesis, which is the condensation of the polyisoprenoid side chain with PHB, generating the first membrane-bound Q intermediate 3-octaprenyl-4-hydroxybenzoate. This chain is 4-hydroxybenzoate octaprenyltransferase, found in Acidovorax ebreus (strain TPSY) (Diaphorobacter sp. (strain TPSY)).